The primary structure comprises 725 residues: Methionine--tRNA ligase (725 aa).

The 'HIGH' region motif lies at 27–37 (PYANGQIHIGH). Residues cysteine 158, cysteine 161, cysteine 171, and cysteine 174 each coordinate Zn(2+). The 'KMSKS' region signature appears at 348–352 (KMSKS). Lysine 351 serves as a coordination point for ATP. The tRNA-binding domain occupies 619-725 (DFAKIDLRIA…SGAKPGMRVK (107 aa)).

Belongs to the class-I aminoacyl-tRNA synthetase family. MetG type 1 subfamily. As to quaternary structure, homodimer. The cofactor is Zn(2+).

The protein localises to the cytoplasm. It catalyses the reaction tRNA(Met) + L-methionine + ATP = L-methionyl-tRNA(Met) + AMP + diphosphate. In terms of biological role, is required not only for elongation of protein synthesis but also for the initiation of all mRNA translation through initiator tRNA(fMet) aminoacylation. This chain is Methionine--tRNA ligase, found in Burkholderia pseudomallei (strain 1710b).